Here is a 165-residue protein sequence, read N- to C-terminus: Thiol peroxidase (165 aa).

Positions 18-165 (PQKGAQAPAF…PNYAAALAAL (148 aa)) constitute a Thioredoxin domain. Cysteine 60 acts as the Cysteine sulfenic acid (-SOH) intermediate in catalysis. Residues cysteine 60 and cysteine 94 are joined by a disulfide bond.

It belongs to the peroxiredoxin family. Tpx subfamily. As to quaternary structure, homodimer.

It catalyses the reaction a hydroperoxide + [thioredoxin]-dithiol = an alcohol + [thioredoxin]-disulfide + H2O. Functionally, thiol-specific peroxidase that catalyzes the reduction of hydrogen peroxide and organic hydroperoxides to water and alcohols, respectively. Plays a role in cell protection against oxidative stress by detoxifying peroxides. This is Thiol peroxidase from Pseudomonas aeruginosa (strain ATCC 15692 / DSM 22644 / CIP 104116 / JCM 14847 / LMG 12228 / 1C / PRS 101 / PAO1).